The primary structure comprises 136 residues: Small ribosomal subunit protein uS8c (136 aa).

Belongs to the universal ribosomal protein uS8 family. In terms of assembly, part of the 30S ribosomal subunit.

The protein resides in the plastid. It localises to the chloroplast. Its function is as follows. One of the primary rRNA binding proteins, it binds directly to 16S rRNA central domain where it helps coordinate assembly of the platform of the 30S subunit. The sequence is that of Small ribosomal subunit protein uS8c (rps8) from Citrus sinensis (Sweet orange).